A 525-amino-acid polypeptide reads, in one-letter code: Nucleolar complex protein 4 homolog B (525 aa).

Over residues 1-10 (MAARKAKHAF) the composition is skewed to basic residues. The segment at 1–21 (MAARKAKHAFRSQATQSDAER) is disordered. The next 3 membrane-spanning stretches (helical) occupy residues 307–327 (AAYDVGGAISLLALNGLFILI), 358–378 (FFHLANLFLSSTHLPVYLVAA), and 386–406 (LALTAPPQVLLMIIPFICNLI).

It belongs to the CBF/MAK21 family.

The protein localises to the nucleus membrane. It is found in the nucleus. Its subcellular location is the nucleolus. This Xenopus laevis (African clawed frog) protein is Nucleolar complex protein 4 homolog B (noc4l-b).